The chain runs to 323 residues: ADP-L-glycero-D-manno-heptose-6-epimerase (323 aa).

NADP(+)-binding positions include 10 to 11, 31 to 32, K38, R53, 75 to 79, and N92; these read FI, DN, and MGACS. The active-site Proton acceptor is Y143. An NADP(+)-binding site is contributed by K147. N170 serves as a coordination point for substrate. NADP(+)-binding residues include V171 and K179. Catalysis depends on K179, which acts as the Proton acceptor. Residues D181, K188, 202–205, R216, and Y281 contribute to the substrate site; that span reads FRSC.

It belongs to the NAD(P)-dependent epimerase/dehydratase family. HldD subfamily. In terms of assembly, homopentamer. NADP(+) serves as cofactor.

The enzyme catalyses ADP-D-glycero-beta-D-manno-heptose = ADP-L-glycero-beta-D-manno-heptose. It participates in nucleotide-sugar biosynthesis; ADP-L-glycero-beta-D-manno-heptose biosynthesis; ADP-L-glycero-beta-D-manno-heptose from D-glycero-beta-D-manno-heptose 7-phosphate: step 4/4. Functionally, catalyzes the interconversion between ADP-D-glycero-beta-D-manno-heptose and ADP-L-glycero-beta-D-manno-heptose via an epimerization at carbon 6 of the heptose. The polypeptide is ADP-L-glycero-D-manno-heptose-6-epimerase (Nitratidesulfovibrio vulgaris (strain DP4) (Desulfovibrio vulgaris)).